Here is a 360-residue protein sequence, read N- to C-terminus: Type II methyltransferase M.BglII (360 aa).

A disordered region spans residues 316-341; that stretch reads TRQRKGSKPSLDSKAHPEEHHKKEIV. Residues 326-341 are compositionally biased toward basic and acidic residues; sequence LDSKAHPEEHHKKEIV.

It belongs to the N(4)/N(6)-methyltransferase family. N(4) subfamily.

The catalysed reaction is a 2'-deoxycytidine in DNA + S-adenosyl-L-methionine = an N(4)-methyl-2'-deoxycytidine in DNA + S-adenosyl-L-homocysteine + H(+). Functionally, a beta subtype methylase, recognizes the double-stranded sequence 5'-AGATCT-3', methylates C-5 on both strands, and protects the DNA from cleavage by the BglII endonuclease. The chain is Type II methyltransferase M.BglII from Bacillus subtilis.